The primary structure comprises 725 residues: Fatty acid oxidation complex subunit alpha (725 aa).

Positions 1–189 (MIYQGENLSV…ALGMIDGVVS (189 aa)) are enoyl-CoA hydratase/isomerase. Residue Asp296 participates in substrate binding. A 3-hydroxyacyl-CoA dehydrogenase region spans residues 311–725 (EPVTSAAVLG…APQSLSAPSA (415 aa)). Residues Met324, Asp343, 400–402 (VVE), Lys407, and Ser429 each bind NAD(+). Residue His450 is the For 3-hydroxyacyl-CoA dehydrogenase activity of the active site. Asn453 serves as a coordination point for NAD(+). Substrate is bound by residues Asn500 and Tyr660.

This sequence in the N-terminal section; belongs to the enoyl-CoA hydratase/isomerase family. It in the C-terminal section; belongs to the 3-hydroxyacyl-CoA dehydrogenase family. In terms of assembly, heterotetramer of two alpha chains (FadB) and two beta chains (FadA).

The enzyme catalyses a (3S)-3-hydroxyacyl-CoA + NAD(+) = a 3-oxoacyl-CoA + NADH + H(+). The catalysed reaction is a (3S)-3-hydroxyacyl-CoA = a (2E)-enoyl-CoA + H2O. It catalyses the reaction a 4-saturated-(3S)-3-hydroxyacyl-CoA = a (3E)-enoyl-CoA + H2O. It carries out the reaction (3S)-3-hydroxybutanoyl-CoA = (3R)-3-hydroxybutanoyl-CoA. The enzyme catalyses a (3Z)-enoyl-CoA = a 4-saturated (2E)-enoyl-CoA. The catalysed reaction is a (3E)-enoyl-CoA = a 4-saturated (2E)-enoyl-CoA. The protein operates within lipid metabolism; fatty acid beta-oxidation. In terms of biological role, involved in the aerobic and anaerobic degradation of long-chain fatty acids via beta-oxidation cycle. Catalyzes the formation of 3-oxoacyl-CoA from enoyl-CoA via L-3-hydroxyacyl-CoA. It can also use D-3-hydroxyacyl-CoA and cis-3-enoyl-CoA as substrate. The polypeptide is Fatty acid oxidation complex subunit alpha (Aliivibrio fischeri (strain MJ11) (Vibrio fischeri)).